A 210-amino-acid polypeptide reads, in one-letter code: Outer-membrane lipoprotein carrier protein (210 aa).

The signal sequence occupies residues 1–23; it reads MKKRIQKTILTVLFSSLSSIAFA.

It belongs to the LolA family. Monomer.

The protein localises to the periplasm. In terms of biological role, participates in the translocation of lipoproteins from the inner membrane to the outer membrane. Only forms a complex with a lipoprotein if the residue after the N-terminal Cys is not an aspartate (The Asp acts as a targeting signal to indicate that the lipoprotein should stay in the inner membrane). This chain is Outer-membrane lipoprotein carrier protein, found in Haemophilus ducreyi (strain 35000HP / ATCC 700724).